We begin with the raw amino-acid sequence, 44 residues long: Antifungal protein R (44 aa).

Belongs to the thaumatin family.

Functionally, has antifungal activity. Inhibits the growth of Trichoderma viridae and Candida albicans. The polypeptide is Antifungal protein R (Hordeum vulgare (Barley)).